Consider the following 426-residue polypeptide: Glutamate-1-semialdehyde 2,1-aminomutase (426 aa).

N6-(pyridoxal phosphate)lysine is present on Lys265.

The protein belongs to the class-III pyridoxal-phosphate-dependent aminotransferase family. HemL subfamily. In terms of assembly, homodimer. Pyridoxal 5'-phosphate is required as a cofactor.

Its subcellular location is the cytoplasm. It carries out the reaction (S)-4-amino-5-oxopentanoate = 5-aminolevulinate. It functions in the pathway porphyrin-containing compound metabolism; protoporphyrin-IX biosynthesis; 5-aminolevulinate from L-glutamyl-tRNA(Glu): step 2/2. The protein is Glutamate-1-semialdehyde 2,1-aminomutase of Shigella boydii serotype 4 (strain Sb227).